Reading from the N-terminus, the 433-residue chain is 3-phosphoshikimate 1-carboxyvinyltransferase (433 aa).

Lys-22, Ser-23, and Arg-27 together coordinate 3-phosphoshikimate. Lys-22 is a phosphoenolpyruvate binding site. Residues Gly-96 and Arg-130 each coordinate phosphoenolpyruvate. 3-phosphoshikimate-binding residues include Ser-176, Ser-177, Gln-178, Ser-204, Asp-319, Asn-342, and Lys-346. Residue Gln-178 coordinates phosphoenolpyruvate. Residue Asp-319 is the Proton acceptor of the active site. Residues Arg-350, Arg-394, and Lys-419 each coordinate phosphoenolpyruvate.

Belongs to the EPSP synthase family. Monomer.

The protein resides in the cytoplasm. The enzyme catalyses 3-phosphoshikimate + phosphoenolpyruvate = 5-O-(1-carboxyvinyl)-3-phosphoshikimate + phosphate. The protein operates within metabolic intermediate biosynthesis; chorismate biosynthesis; chorismate from D-erythrose 4-phosphate and phosphoenolpyruvate: step 6/7. Catalyzes the transfer of the enolpyruvyl moiety of phosphoenolpyruvate (PEP) to the 5-hydroxyl of shikimate-3-phosphate (S3P) to produce enolpyruvyl shikimate-3-phosphate and inorganic phosphate. In Actinobacillus succinogenes (strain ATCC 55618 / DSM 22257 / CCUG 43843 / 130Z), this protein is 3-phosphoshikimate 1-carboxyvinyltransferase.